The chain runs to 938 residues: RIPOR family member 3 (938 aa).

3 positions are modified to phosphoserine: serine 9, serine 24, and serine 340. Position 345 is a phosphothreonine (threonine 345). Phosphoserine is present on residues serine 351 and serine 384. Disordered regions lie at residues 402 to 430 and 579 to 603; these read EMDSFSSEDPRDTETSTSASTSDVGFLPV and FGGSQAPERDSPPPPRPSLKVSPSE.

It belongs to the RIPOR family.

The sequence is that of RIPOR family member 3 from Mus musculus (Mouse).